The chain runs to 330 residues: Pantothenate kinase (330 aa).

An ATP-binding site is contributed by 108-115 (GSVAVGKS).

It belongs to the prokaryotic pantothenate kinase family.

The protein resides in the cytoplasm. It carries out the reaction (R)-pantothenate + ATP = (R)-4'-phosphopantothenate + ADP + H(+). It participates in cofactor biosynthesis; coenzyme A biosynthesis; CoA from (R)-pantothenate: step 1/5. In Allorhizobium ampelinum (strain ATCC BAA-846 / DSM 112012 / S4) (Agrobacterium vitis (strain S4)), this protein is Pantothenate kinase.